A 280-amino-acid polypeptide reads, in one-letter code: Probable ketoamine kinase lp_1983 (280 aa).

87-89 (DWL) is a binding site for ATP. Aspartate 189 acts as the Proton acceptor in catalysis.

Belongs to the fructosamine kinase family.

It catalyses the reaction N(6)-(D-ribulosyl)-L-lysine + ATP = N(6)-(3-O-phospho-D-ribulosyl)-L-lysine + ADP + H(+). The enzyme catalyses N-(D-ribulosyl)-cadaverine + ATP = N-(3-O-phospho-D-ribulosyl)-cadaverine + ADP + H(+). The catalysed reaction is N(6)-(D-erythrulosyl)-L-lysine + ATP = N(6)-(3-O-phospho-D-erythrulosyl)-L-lysine + ADP + H(+). It carries out the reaction N-(D-erythrulosyl)-cadaverine + ATP = N-(3-O-phospho-D-erythrulosyl)-cadaverine + ADP + H(+). It catalyses the reaction N(6)-D-ribulosyl-L-lysyl-[protein] + ATP = N(6)-(3-O-phospho-D-ribulosyl)-L-lysyl-[protein] + ADP + H(+). The enzyme catalyses N(6)-(D-erythrulosyl)-L-lysyl-[protein] + ATP = N(6)-(3-O-phospho-D-erythrulosyl)-L-lysyl-[protein] + ADP + H(+). In terms of biological role, ketoamine kinase that phosphorylates ketoamines, such as erythruloselysine, erythrulosecadaverine, ribuloselysine and ribulosecadaverine, on the third carbon of the sugar moiety to generate ketoamine 3-phosphate. Has higher activity on free lysine (erythruloselysine and ribuloselysine), than on ribuloselysine and erythruloselysine residues on glycated proteins. This Lactiplantibacillus plantarum (strain ATCC BAA-793 / NCIMB 8826 / WCFS1) (Lactobacillus plantarum) protein is Probable ketoamine kinase lp_1983.